A 386-amino-acid polypeptide reads, in one-letter code: MLEFVRPLQSILQIKQVNSTDLVWRLHCRVTVFLLLLASLLLSARQYFGNPIDCVIGSGTVSSSTMNEFCWIMGTYISNDPNFVLDSTDLVKINAKIGHIPESERSYQKYYQWVVFILALQACMFSVPNFLWKAWEAGRLQSLCDGLTTPIVPDHWEKTRKKQLITYLSADFPRLHRTYLLRYCFCTLLNFCNVLLNIFLVNVIFSGFWSNYHPAVKALLSFDFPSWNRYNSQVFPKIAKCDFHFVGPSGSKQNRDGLCLLPLNVVNEKIFAFIWLWFLGLLVISMLNLLFWIVVLCSKGFRLWLLTAPLYPIRTSYVARALDGQGVGQWFLLYQLCRNLNPIVGRELVQSVSKAKGHNGHKTFRMPKGGEPDFYTDPEGYDEEGV.

Residues 1–21 are Cytoplasmic-facing; that stretch reads MLEFVRPLQSILQIKQVNSTD. A helical transmembrane segment spans residues 22–42; sequence LVWRLHCRVTVFLLLLASLLL. Topologically, residues 43–111 are extracellular; sequence SARQYFGNPI…ESERSYQKYY (69 aa). Residues 112–132 form a helical membrane-spanning segment; sequence QWVVFILALQACMFSVPNFLW. At 133–187 the chain is on the cytoplasmic side; that stretch reads KAWEAGRLQSLCDGLTTPIVPDHWEKTRKKQLITYLSADFPRLHRTYLLRYCFCT. The chain crosses the membrane as a helical span at residues 188 to 208; sequence LLNFCNVLLNIFLVNVIFSGF. The Extracellular segment spans residues 209-272; the sequence is WSNYHPAVKA…LNVVNEKIFA (64 aa). The chain crosses the membrane as a helical span at residues 273–293; it reads FIWLWFLGLLVISMLNLLFWI. The Cytoplasmic segment spans residues 294–386; the sequence is VVLCSKGFRL…DPEGYDEEGV (93 aa). Positions 358–386 are disordered; sequence HNGHKTFRMPKGGEPDFYTDPEGYDEEGV. The segment covering 374-386 has biased composition (acidic residues); it reads FYTDPEGYDEEGV.

It belongs to the pannexin family.

The protein resides in the cell membrane. It localises to the cell junction. The protein localises to the gap junction. Functionally, structural component of gap junctions. Required for normal development of ovary. Required for normal egg production after blood meal. Required for normal development of testis. In terms of biological role, (Microbial infection) Modulates the development of Plasmodium falciparum oocysts. In Anopheles gambiae (African malaria mosquito), this protein is Innexin inx4.